We begin with the raw amino-acid sequence, 440 residues long: Thymidine phosphorylase (440 aa).

It belongs to the thymidine/pyrimidine-nucleoside phosphorylase family. Homodimer.

It catalyses the reaction thymidine + phosphate = 2-deoxy-alpha-D-ribose 1-phosphate + thymine. The protein operates within pyrimidine metabolism; dTMP biosynthesis via salvage pathway; dTMP from thymine: step 1/2. The enzymes which catalyze the reversible phosphorolysis of pyrimidine nucleosides are involved in the degradation of these compounds and in their utilization as carbon and energy sources, or in the rescue of pyrimidine bases for nucleotide synthesis. This Enterobacter sp. (strain 638) protein is Thymidine phosphorylase.